Here is a 341-residue protein sequence, read N- to C-terminus: S-adenosylmethionine:tRNA ribosyltransferase-isomerase (341 aa).

Belongs to the QueA family. In terms of assembly, monomer.

The protein localises to the cytoplasm. The enzyme catalyses 7-aminomethyl-7-carbaguanosine(34) in tRNA + S-adenosyl-L-methionine = epoxyqueuosine(34) in tRNA + adenine + L-methionine + 2 H(+). Its pathway is tRNA modification; tRNA-queuosine biosynthesis. Its function is as follows. Transfers and isomerizes the ribose moiety from AdoMet to the 7-aminomethyl group of 7-deazaguanine (preQ1-tRNA) to give epoxyqueuosine (oQ-tRNA). This Chlorobium chlorochromatii (strain CaD3) protein is S-adenosylmethionine:tRNA ribosyltransferase-isomerase.